We begin with the raw amino-acid sequence, 249 residues long: Tetraspanin-18 (249 aa).

Residues M1 to M13 lie on the Cytoplasmic side of the membrane. A helical transmembrane segment spans residues F14–V34. At M35–P49 the chain is on the extracellular side. The chain crosses the membrane as a helical span at residues L50–F70. Residues L71 to L83 lie on the Cytoplasmic side of the membrane. A helical membrane pass occupies residues L84–L104. The Extracellular portion of the chain corresponds to A105–G223. Residues N111 and N129 are each glycosylated (N-linked (GlcNAc...) asparagine). A helical transmembrane segment spans residues A224–F244. The Cytoplasmic segment spans residues R245–Q249.

This sequence belongs to the tetraspanin (TM4SF) family. As to quaternary structure, interacts with ORAI1; this interaction regulates ORAI1 exit from the endoplasmic (ER), and/or Golgi, and trafficking to the cell surface.

The protein resides in the membrane. In terms of biological role, plays a role in the cell surface localization of ORAI1 and may participate in the regulation of Ca(2+) signaling and the VWF release in response to inflammatory stimuli. The protein is Tetraspanin-18 of Bos taurus (Bovine).